The primary structure comprises 103 residues: Ig kappa-b5 chain C region (103 aa).

The Ig-like domain maps to 5–99 (PTVLIFPPAP…GAGSVVQSFS (95 aa)). Cysteines 26 and 85 form a disulfide.

In Oryctolagus cuniculus (Rabbit), this protein is Ig kappa-b5 chain C region.